The primary structure comprises 389 residues: LL-diaminopimelate aminotransferase (389 aa).

Substrate is bound by residues Tyr13 and Gly38. Pyridoxal 5'-phosphate is bound by residues Tyr67, 101–102 (SK), Tyr126, Asn176, Tyr207, and 235–237 (SLS). 3 residues coordinate substrate: Lys102, Tyr126, and Asn176. At Lys238 the chain carries N6-(pyridoxal phosphate)lysine. Residue Arg246 coordinates pyridoxal 5'-phosphate. Residue Arg364 coordinates substrate.

It belongs to the class-I pyridoxal-phosphate-dependent aminotransferase family. LL-diaminopimelate aminotransferase subfamily. As to quaternary structure, homodimer. Requires pyridoxal 5'-phosphate as cofactor.

The enzyme catalyses (2S,6S)-2,6-diaminopimelate + 2-oxoglutarate = (S)-2,3,4,5-tetrahydrodipicolinate + L-glutamate + H2O + H(+). Its pathway is amino-acid biosynthesis; L-lysine biosynthesis via DAP pathway; LL-2,6-diaminopimelate from (S)-tetrahydrodipicolinate (aminotransferase route): step 1/1. Its function is as follows. Involved in the synthesis of meso-diaminopimelate (m-DAP or DL-DAP), required for both lysine and peptidoglycan biosynthesis. Catalyzes the direct conversion of tetrahydrodipicolinate to LL-diaminopimelate. This is LL-diaminopimelate aminotransferase from Halothermothrix orenii (strain H 168 / OCM 544 / DSM 9562).